The primary structure comprises 278 residues: Large ribosomal subunit protein uL2 (278 aa).

The disordered stretch occupies residues 211 to 278 (KRWLGKRPQS…LIIRRRKGSK (68 aa)). A compositionally biased stretch (basic and acidic residues) spans 258–270 (KTRDTKKASEKLI).

It belongs to the universal ribosomal protein uL2 family. As to quaternary structure, part of the 50S ribosomal subunit. Forms a bridge to the 30S subunit in the 70S ribosome.

One of the primary rRNA binding proteins. Required for association of the 30S and 50S subunits to form the 70S ribosome, for tRNA binding and peptide bond formation. It has been suggested to have peptidyltransferase activity; this is somewhat controversial. Makes several contacts with the 16S rRNA in the 70S ribosome. The polypeptide is Large ribosomal subunit protein uL2 (Lactobacillus helveticus (strain DPC 4571)).